The following is a 242-amino-acid chain: UPF0246 protein SPCG_1533 (242 aa).

The protein belongs to the UPF0246 family.

This chain is UPF0246 protein SPCG_1533, found in Streptococcus pneumoniae (strain CGSP14).